The primary structure comprises 248 residues: 3-deoxy-manno-octulosonate cytidylyltransferase (248 aa).

It belongs to the KdsB family.

The protein localises to the cytoplasm. The enzyme catalyses 3-deoxy-alpha-D-manno-oct-2-ulosonate + CTP = CMP-3-deoxy-beta-D-manno-octulosonate + diphosphate. It functions in the pathway nucleotide-sugar biosynthesis; CMP-3-deoxy-D-manno-octulosonate biosynthesis; CMP-3-deoxy-D-manno-octulosonate from 3-deoxy-D-manno-octulosonate and CTP: step 1/1. The protein operates within bacterial outer membrane biogenesis; lipopolysaccharide biosynthesis. Activates KDO (a required 8-carbon sugar) for incorporation into bacterial lipopolysaccharide in Gram-negative bacteria. This Desulfosudis oleivorans (strain DSM 6200 / JCM 39069 / Hxd3) (Desulfococcus oleovorans) protein is 3-deoxy-manno-octulosonate cytidylyltransferase.